A 130-amino-acid polypeptide reads, in one-letter code: NADH-quinone oxidoreductase subunit A (130 aa).

A run of 3 helical transmembrane segments spans residues 17–37, 74–94, and 99–119; these read YIFV…MLAL, LVGI…PWAV, and LGPA…VGFV.

The protein belongs to the complex I subunit 3 family. As to quaternary structure, NDH-1 is composed of 14 different subunits. Subunits NuoA, H, J, K, L, M, N constitute the membrane sector of the complex.

The protein resides in the cell inner membrane. It carries out the reaction a quinone + NADH + 5 H(+)(in) = a quinol + NAD(+) + 4 H(+)(out). In terms of biological role, NDH-1 shuttles electrons from NADH, via FMN and iron-sulfur (Fe-S) centers, to quinones in the respiratory chain. The immediate electron acceptor for the enzyme in this species is believed to be ubiquinone. Couples the redox reaction to proton translocation (for every two electrons transferred, four hydrogen ions are translocated across the cytoplasmic membrane), and thus conserves the redox energy in a proton gradient. This chain is NADH-quinone oxidoreductase subunit A, found in Neorickettsia sennetsu (strain ATCC VR-367 / Miyayama) (Ehrlichia sennetsu).